A 776-amino-acid polypeptide reads, in one-letter code: V-set and immunoglobulin domain-containing protein 10-like 2 (776 aa).

The signal sequence occupies residues 1–28 (MVGLSAHHRPLGCRLLILFCLLHPGASG). 5 Ig-like domains span residues 32-140 (PTSN…LYLM), 150-234 (PRVQ…AFLD), 242-324 (PVIT…TTVQ), 399-498 (PTLA…LRLE), and 500-592 (PQLT…VLLE). 5 cysteine pairs are disulfide-bonded: cysteine 56–cysteine 122, cysteine 169–cysteine 217, cysteine 268–cysteine 308, cysteine 435–cysteine 480, and cysteine 521–cysteine 576. One can recognise a Fibronectin type-III domain in the interval 608-708 (TPPNVTISRL…EVKTPVDPAF (101 aa)). Asparagine 611 and asparagine 637 each carry an N-linked (GlcNAc...) asparagine glycan. The helical transmembrane segment at 713–733 (AVLGAAGTGVVVALATSLLVF) threads the bilayer.

It localises to the membrane. This Mus musculus (Mouse) protein is V-set and immunoglobulin domain-containing protein 10-like 2.